A 1065-amino-acid polypeptide reads, in one-letter code: Exportin-T (1065 aa).

It belongs to the exportin family.

The protein localises to the nucleus. It localises to the cytoplasm. TRNA nucleus export receptor which facilitates tRNA translocation across the nuclear pore complex. Involved in pre-tRNA splicing, probably by affecting the interaction of pre-tRNA with splicing endonuclease. The polypeptide is Exportin-T (LOS1) (Coprinopsis cinerea (strain Okayama-7 / 130 / ATCC MYA-4618 / FGSC 9003) (Inky cap fungus)).